The primary structure comprises 95 residues: Aspartyl/glutamyl-tRNA(Asn/Gln) amidotransferase subunit C (95 aa).

Belongs to the GatC family. In terms of assembly, heterotrimer of A, B and C subunits.

It catalyses the reaction L-glutamyl-tRNA(Gln) + L-glutamine + ATP + H2O = L-glutaminyl-tRNA(Gln) + L-glutamate + ADP + phosphate + H(+). The enzyme catalyses L-aspartyl-tRNA(Asn) + L-glutamine + ATP + H2O = L-asparaginyl-tRNA(Asn) + L-glutamate + ADP + phosphate + 2 H(+). Functionally, allows the formation of correctly charged Asn-tRNA(Asn) or Gln-tRNA(Gln) through the transamidation of misacylated Asp-tRNA(Asn) or Glu-tRNA(Gln) in organisms which lack either or both of asparaginyl-tRNA or glutaminyl-tRNA synthetases. The reaction takes place in the presence of glutamine and ATP through an activated phospho-Asp-tRNA(Asn) or phospho-Glu-tRNA(Gln). The protein is Aspartyl/glutamyl-tRNA(Asn/Gln) amidotransferase subunit C of Nitrosospira multiformis (strain ATCC 25196 / NCIMB 11849 / C 71).